The chain runs to 96 residues: Beta-defensin 20 (96 aa).

Positions 1-21 (MKLPQLLLILLFVVLADSVQP) are cleaved as a signal peptide. 3 disulfide bridges follow: C24–C52, C32–C46, and C36–C53.

This sequence belongs to the beta-defensin family.

It is found in the secreted. Has antibacterial activity. The polypeptide is Beta-defensin 20 (Defb20) (Rattus norvegicus (Rat)).